The sequence spans 491 residues: Serine hydroxymethyltransferase (491 aa).

(6S)-5,6,7,8-tetrahydrofolate-binding positions include L173 and 177-179; that span reads GHL. Residue K285 is modified to N6-(pyridoxal phosphate)lysine.

The protein belongs to the SHMT family. Homodimer. Requires pyridoxal 5'-phosphate as cofactor.

It is found in the cytoplasm. It catalyses the reaction (6R)-5,10-methylene-5,6,7,8-tetrahydrofolate + glycine + H2O = (6S)-5,6,7,8-tetrahydrofolate + L-serine. Its pathway is one-carbon metabolism; tetrahydrofolate interconversion. It functions in the pathway amino-acid biosynthesis; glycine biosynthesis; glycine from L-serine: step 1/1. Its function is as follows. Catalyzes the reversible interconversion of serine and glycine with tetrahydrofolate (THF) serving as the one-carbon carrier. This reaction serves as the major source of one-carbon groups required for the biosynthesis of purines, thymidylate, methionine, and other important biomolecules. Also exhibits THF-independent aldolase activity toward beta-hydroxyamino acids, producing glycine and aldehydes, via a retro-aldol mechanism. This is Serine hydroxymethyltransferase from Cutibacterium acnes (strain DSM 16379 / KPA171202) (Propionibacterium acnes).